The sequence spans 836 residues: Zinc fingers and homeoboxes protein 2 (836 aa).

Residues 24–58 (LEEADRAKDKGLGVPPSDVSKERWAAEPEPSSKES) form a disordered region. The tract at residues 27–77 (ADRAKDKGLGVPPSDVSKERWAAEPEPSSKESEVVEVRSVGESQSKKLQGG) is interaction with EFNB1. Over residues 42-58 (VSKERWAAEPEPSSKES) the composition is skewed to basic and acidic residues. 2 C2H2-type zinc fingers span residues 78-101 (YECKYCPYSTQNLNEFTEHVDMQH) and 110-133 (YVCAECNFTTKKYDSLSDHNSKFH). The disordered stretch occupies residues 168–210 (SAPGSSDNDPGVSVGKTATVKTGKQKADAKKVPKKPDEAAPDN). Positions 192–210 (QKADAKKVPKKPDEAAPDN) are enriched in basic and acidic residues. Residues 195 to 358 (DAKKVPKKPD…PAQLTPTKVS (164 aa)) form a required for homodimerization region. 4 DNA-binding regions (homeobox) span residues 263-324 (NTTK…WSPE), 439-501 (TPAS…IVHI), 530-591 (AQKF…EQAV), and 628-690 (SPSS…TLSW). Residues 263-446 (NTTKYNSALD…PLTPASDRKK (184 aa)) form a required for repressor activity region. A required for interaction with NFYA region spans residues 263 to 497 (NTTKYNSALD…SDHRYRCQRG (235 aa)). A required for nuclear localization region spans residues 317 to 446 (HGISWSPEEV…PLTPASDRKK (130 aa)). The interval 404 to 442 (GQKRPLVTPQAAPEPKRPHIAQVPEPPPKVANTPLTPAS) is disordered. Lys455 participates in a covalent cross-link: Glycyl lysine isopeptide (Lys-Gly) (interchain with G-Cter in SUMO2). Basic and acidic residues-rich tracts occupy residues 700–709 (SDDHGHDVAS) and 730–746 (YAKDPKALGEEESEKLV). The tract at residues 700–836 (SDDHGHDVAS…DSTPAEAGQA (137 aa)) is disordered. A phosphoserine mark is found at Ser824 and Ser826.

Belongs to the ZHX family. As to quaternary structure, homodimer (via homeobox domain 1). Heterodimer with ZHX1 (via homeobox domain 1). Heterodimer with ZHX3 (via homeobox domain 1). Heterodimerization with ZHX1 is not necessary for repressor activity. Interacts (via homeobox domain) with NFYA (via N-terminus). Interacts with EFNB1 intracellular domain peptide; the interaction enhances ZHX2 transcriptional repression activity.

Its subcellular location is the nucleus. Functionally, acts as a transcriptional repressor. Represses the promoter activity of the CDC25C gene stimulated by NFYA. May play a role in retinal development where it regulates the composition of bipolar cell populations, by promoting differentiation of bipolar OFF-type cells. In the brain, may promote maintenance and suppress differentiation of neural progenitor cells in the developing cortex. The protein is Zinc fingers and homeoboxes protein 2 (Zhx2) of Rattus norvegicus (Rat).